A 382-amino-acid polypeptide reads, in one-letter code: Gap junction alpha-1 protein (382 aa).

The Cytoplasmic segment spans residues glycine 2–lysine 23. Serine 5 bears the Phosphoserine mark. The chain crosses the membrane as a helical span at residues valine 24 to alanine 44. At tryptophan 45–arginine 76 the chain is on the extracellular side. 2 disulfides stabilise this stretch: cysteine 54/cysteine 192 and cysteine 187/cysteine 198. The chain crosses the membrane as a helical span at residues phenylalanine 77–phenylalanine 97. Over tyrosine 98 to tyrosine 155 the chain is Cytoplasmic. Residue lysine 144 forms a Glycyl lysine isopeptide (Lys-Gly) (interchain with G-Cter in SUMO) linkage. Residues isoleucine 156–isoleucine 176 traverse the membrane as a helical segment. The Extracellular segment spans residues tyrosine 177–threonine 207. Residues isoleucine 208–leucine 228 traverse the membrane as a helical segment. Residues phenylalanine 229 to isoleucine 382 are Cytoplasmic-facing. A Glycyl lysine isopeptide (Lys-Gly) (interchain with G-Cter in SUMO) cross-link involves residue lysine 237. The interval serine 244–isoleucine 382 is interaction with NOV. Tyrosine 247 is subject to Phosphotyrosine. Residues serine 255, serine 257, and serine 262 each carry the phosphoserine modification. Residues lysine 264–isoleucine 382 form an interaction with UBQLN4 region. Cysteine 271 is subject to S-nitrosocysteine. The residue at position 275 (threonine 275) is a Phosphothreonine. Phosphoserine occurs at positions 306 and 314. Residues glutamine 317–alanine 332 show a composition bias toward polar residues. The disordered stretch occupies residues glutamine 317 to isoleucine 382. At serine 325 the chain carries Phosphoserine; by CK1. A Phosphothreonine modification is found at threonine 326. Phosphoserine; by CK1 occurs at positions 328 and 330. Serine 344 and serine 365 each carry phosphoserine. Low complexity predominate over residues arginine 362–arginine 374. Serine 368 is subject to Phosphoserine; by PKC/PRKCG and PKC/PRKCD. 2 positions are modified to phosphoserine: serine 369 and serine 373.

The protein belongs to the connexin family. Alpha-type (group II) subfamily. As to quaternary structure, a connexon is composed of a hexamer of connexins. Interacts with SGSM3. Interacts with RIC1/CIP150. Interacts with CNST and CSNK1D. Interacts (via C-terminus) with TJP1. Interacts (via C-terminus) with SRC (via SH3 domain). Interacts (not ubiquitinated) with UBQLN4 (via UBA domain). Interacts with NOV. Interacts with TMEM65. Interacts with ANK3/ANKG and PKP2. In terms of processing, phosphorylation at Ser-325, Ser-328 and Ser-330 by CK1 modulates gap junction assembly. Phosphorylated at Ser-368 by PRKCG; phosphorylation induces disassembly of gap junction plaques and inhibition of gap junction activity. Phosphorylation at Ser-368 by PRKCD triggers its internalization into small vesicles leading to proteasome-mediated degradation. Post-translationally, sumoylated with SUMO1, SUMO2 and SUMO3, which may regulate the level of functional Cx43 gap junctions at the plasma membrane. May be desumoylated by SENP1 or SENP2. S-nitrosylation at Cys-271 is enriched at the muscle endothelial gap junction in arteries, it augments channel permeability and may regulate of smooth muscle cell to endothelial cell communication. In terms of processing, acetylated in the developing cortex; leading to delocalization from the cell membrane.

It is found in the cell membrane. The protein localises to the cell junction. It localises to the gap junction. Its subcellular location is the endoplasmic reticulum. Gap junction protein that acts as a regulator of bladder capacity. A gap junction consists of a cluster of closely packed pairs of transmembrane channels, the connexons, through which materials of low MW diffuse from one cell to a neighboring cell. May play a critical role in the physiology of hearing by participating in the recycling of potassium to the cochlear endolymph. Negative regulator of bladder functional capacity: acts by enhancing intercellular electrical and chemical transmission, thus sensitizing bladder muscles to cholinergic neural stimuli and causing them to contract. May play a role in cell growth inhibition through the regulation of NOV expression and localization. Plays an essential role in gap junction communication in the ventricles. The sequence is that of Gap junction alpha-1 protein (GJA1) from Oryctolagus cuniculus (Rabbit).